The sequence spans 199 residues: Urease accessory protein UreG (199 aa).

Position 8–15 (Gly-8–Thr-15) interacts with GTP.

It belongs to the SIMIBI class G3E GTPase family. UreG subfamily. Homodimer. UreH, UreF and UreG form a complex that acts as a GTP-hydrolysis-dependent molecular chaperone, activating the urease apoprotein by helping to assemble the nickel containing metallocenter of UreC. The UreE protein probably delivers the nickel.

Its subcellular location is the cytoplasm. In terms of biological role, facilitates the functional incorporation of the urease nickel metallocenter. This process requires GTP hydrolysis, probably effectuated by UreG. The sequence is that of Urease accessory protein UreG from Helicobacter acinonychis (strain Sheeba).